A 505-amino-acid chain; its full sequence is DNA primase large subunit (505 aa).

The interval leucine 253–lysine 270 is interdomain linker. The segment at lysine 266–glutamate 503 is interacts with PRIM1. [4Fe-4S] cluster contacts are provided by cysteine 287, cysteine 367, cysteine 384, and cysteine 424. The tract at residues histidine 300–asparagine 442 is RNA:DNA duplex binding. The disordered stretch occupies residues lysine 463–alanine 486. Residues glutamine 467–glutamine 478 show a composition bias toward polar residues. Residue threonine 470 is modified to Phosphothreonine.

It belongs to the eukaryotic-type primase large subunit family. Heterodimer of a catalytic subunit PRIM1 and a regulatory subunit PRIM2, also known as the DNA primase complex. Interacts via (C-terminus) with PRIM1. Component of the alpha DNA polymerase complex (also known as the alpha DNA polymerase-primase complex) consisting of four subunits: the catalytic subunit POLA1, the regulatory subunit POLA2, and the primase complex subunits PRIM1 and PRIM2 respectively. Within the complex, POLA1 directly interacts with PRIM2. [4Fe-4S] cluster is required as a cofactor.

Regulatory subunit of the DNA primase complex and component of the DNA polymerase alpha complex (also known as the alpha DNA polymerase-primase complex) which play an essential role in the initiation of DNA synthesis. During the S phase of the cell cycle, the DNA polymerase alpha complex (composed of a catalytic subunit POLA1, an accessory subunit POLA2 and two primase subunits, the catalytic subunit PRIM1 and the regulatory subunit PRIM2) is recruited to DNA at the replicative forks via direct interactions with MCM10 and WDHD1. The primase subunit of the polymerase alpha complex initiates DNA synthesis by oligomerising short RNA primers on both leading and lagging strands. These primers are initially extended by the polymerase alpha catalytic subunit and subsequently transferred to polymerase delta and polymerase epsilon for processive synthesis on the lagging and leading strand, respectively. In the primase complex, both subunits are necessary for the initial di-nucleotide formation, but the extension of the primer depends only on the catalytic subunit. Binds RNA:DNA duplex and coordinates the catalytic activities of PRIM1 and POLA2 during primase-to-polymerase switch. The chain is DNA primase large subunit (Prim2) from Mus musculus (Mouse).